The chain runs to 126 residues: Holo-[acyl-carrier-protein] synthase (126 aa).

D9 and E58 together coordinate Mg(2+).

Belongs to the P-Pant transferase superfamily. AcpS family. Mg(2+) is required as a cofactor.

Its subcellular location is the cytoplasm. It catalyses the reaction apo-[ACP] + CoA = holo-[ACP] + adenosine 3',5'-bisphosphate + H(+). Functionally, transfers the 4'-phosphopantetheine moiety from coenzyme A to a Ser of acyl-carrier-protein. This chain is Holo-[acyl-carrier-protein] synthase, found in Vibrio atlanticus (strain LGP32) (Vibrio splendidus (strain Mel32)).